The chain runs to 164 residues: Histone H3-like centromeric protein CENH3 (164 aa).

Positions 1–11 (MARTKHPAVRK) are enriched in basic residues. The segment at 1-71 (MARTKHPAVR…QRKPHRFRPG (71 aa)) is disordered. Position 5 is an N6,N6,N6-trimethyllysine; alternate (K5). The residue at position 5 (K5) is an N6,N6-dimethyllysine; alternate. N6-methyllysine; alternate occurs at positions 5, 19, and 30. Over residues 12–26 (SKAEPKKKLQFERSP) the composition is skewed to basic and acidic residues. An N6-acetyllysine; alternate modification is found at K19. K30 is subject to N6,N6,N6-trimethyllysine; alternate. Position 30 is an N6,N6-dimethyllysine; alternate (K30). Low complexity predominate over residues 40-55 (TSATTRSAAGTSASGT). Over residues 60–69 (TKQRKPHRFR) the composition is skewed to basic residues.

The protein belongs to the histone H3 family.

The protein resides in the chromosome. It localises to the centromere. Its subcellular location is the kinetochore. In terms of biological role, histone H3-like variant which exclusively replaces conventional H3 in the nucleosome core of centromeric chromatin at the inner plate of the kinetochore. Required for recruitment and assembly of kinetochore proteins, mitotic progression and chromosome segregation. In Oryza sativa subsp. japonica (Rice), this protein is Histone H3-like centromeric protein CENH3.